We begin with the raw amino-acid sequence, 736 residues long: Glycogen [starch] synthase, muscle (736 aa).

S8 bears the Phosphoserine; by AMPK and PKA mark. The residue at position 11 (S11) is a Phosphoserine. K39 contributes to the UDP binding site. UDP-alpha-D-glucose contacts are provided by H205 and R211. Alpha-D-glucose 6-phosphate-binding residues include H291, E292, Q294, H297, and K301. R331 provides a ligand contact to UDP. R331 contacts UDP-alpha-D-glucose. A Phosphoserine modification is found at S412. Residue H501 coordinates alpha-D-glucose 6-phosphate. UDP-alpha-D-glucose contacts are provided by E510, W512, and G513. T515 lines the UDP pocket. 2 residues coordinate alpha-D-glucose 6-phosphate: R582 and R586. A disordered region spans residues 631-736 (TQGYRYPRPA…PASSLGEERN (106 aa)). S641 bears the Phosphoserine; by DYRK2, GSK3-alpha, GSK3-beta and PASK mark. A phosphoserine; by GSK3-alpha and GSK3-beta mark is found at S645 and S649. S652 carries the phosphoserine modification. S653 carries the post-translational modification Phosphoserine; by GSK3-alpha and GSK3-beta. Position 657 is a phosphoserine; by CK2 (S657). A compositionally biased stretch (acidic residues) spans 658–681 (EDEEEPRDLPPDEDDERYDEDEEA). The span at 682–695 (AKDRRNIRAPEWPR) shows a compositional bias: basic and acidic residues. At S698 the chain carries Phosphoserine. Residue T700 is modified to Phosphothreonine. At S709 the chain carries Phosphoserine. The segment covering 714-727 (PSSSVSTPSEPLSP) has biased composition (low complexity). At T720 the chain carries Phosphothreonine. Phosphoserine occurs at positions 726 and 730.

It belongs to the glycosyltransferase 3 family. As to quaternary structure, part of the GYS1-GYG1 complex, a heterooctamer composed of a tetramer of GYS1 and 2 dimers of GYG1, where each GYS1 protomer binds to one GYG1 subunit (via GYG1 C-terminus); the GYS1 tetramer may dissociate from GYG1 dimers to continue glycogen polymerization on its own. In terms of processing, phosphorylation at Ser-8 by AMPK inactivates the enzyme activity. Primed phosphorylation at Ser-657 (site 5) by CSNK2A1 and CSNK2A2 is required for inhibitory phosphorylation at Ser-641 (site 3a), Ser-645 (site 3b), Ser-649 (site 3c) and Ser-653 (site 4) by GSK3A an GSK3B. Phosphorylated at Ser-641 by PASK, leading to inactivation; phosphorylation by PASK is inhibited by glycogen. Phosphorylated at Ser-641 by DYRK2, leading to inactivation. Dephosphorylation at Ser-641 and Ser-645 by PP1 activates the enzyme.

The catalysed reaction is [(1-&gt;4)-alpha-D-glucosyl](n) + UDP-alpha-D-glucose = [(1-&gt;4)-alpha-D-glucosyl](n+1) + UDP + H(+). The protein operates within glycan biosynthesis; glycogen biosynthesis. Allosteric activation by glucose-6-phosphate. Phosphorylation reduces the activity towards UDP-glucose. When in the non-phosphorylated state, glycogen synthase does not require glucose-6-phosphate as an allosteric activator; when phosphorylated it does. Glycogen synthase participates in the glycogen biosynthetic process along with glycogenin and glycogen branching enzyme. Extends the primer composed of a few glucose units formed by glycogenin by adding new glucose units to it. In this context, glycogen synthase transfers the glycosyl residue from UDP-Glc to the non-reducing end of alpha-1,4-glucan. The chain is Glycogen [starch] synthase, muscle (GYS1) from Bos taurus (Bovine).